A 93-amino-acid polypeptide reads, in one-letter code: Co-chaperonin GroES (93 aa).

Belongs to the GroES chaperonin family. As to quaternary structure, heptamer of 7 subunits arranged in a ring. Interacts with the chaperonin GroEL.

The protein localises to the cytoplasm. Together with the chaperonin GroEL, plays an essential role in assisting protein folding. The GroEL-GroES system forms a nano-cage that allows encapsulation of the non-native substrate proteins and provides a physical environment optimized to promote and accelerate protein folding. GroES binds to the apical surface of the GroEL ring, thereby capping the opening of the GroEL channel. This chain is Co-chaperonin GroES, found in Streptococcus constellatus.